A 113-amino-acid chain; its full sequence is N-alpha-acetyltransferase 38, NatC auxiliary subunit (113 aa).

Positions 1 to 29 are disordered; sequence MAAVLEENGCSRQSSPGAGDSDAEAGDTA. The region spanning 28–106 is the Sm domain; sequence TARHKLESLL…IVSIQVELES (79 aa).

Belongs to the snRNP Sm proteins family. In terms of assembly, component of the N-terminal acetyltransferase C (NatC) complex.

It is found in the cytoplasm. The protein localises to the nucleus. Its function is as follows. Auxillary component of the N-terminal acetyltransferase C (NatC) complex which catalyzes acetylation of N-terminal methionine residues. N-terminal acetylation protects proteins from ubiquitination and degradation by the N-end rule pathway. In Xenopus tropicalis (Western clawed frog), this protein is N-alpha-acetyltransferase 38, NatC auxiliary subunit (naa38).